Reading from the N-terminus, the 512-residue chain is MAESGLAMWPSLLLLLLLPGPPPVAGLEDAAFPHLGESLQPLPRACPLRCSCPRVDTVDCDGLDLRVFPDNITRAAQHLSLQNNQLQELPYNELSRLSGLRTLNLHNNLISSEGLPDEAFESLTQLQHLCVAHNKLSVAPQFLPRSLRVADLAANQVMEIFPLTFGEKPALRSVYLHNNQLSNAGLPPDAFRGSEAIATLSLSNNQLSYLPPSLPPSLERLHLQNNLISKVPRGALSRQTQLRELYLQHNQLTDSGLDATTFSKLHSLEYLDLSHNQLTTVPAGLPRTLAILHLGRNRIRQVEAARLHGARGLRYLLLQHNQLGSSGLPAGALRPLRGLHTLHLYGNGLDRVPPALPRRLRALVLPHNHVAALGARDLVATPGLTELNLAYNRLASARVHHRAFRRLRALRSLDLAGNQLTRLPMGLPTGLRTLQLQRNQLRMLEPEPLAGLDQLRELSLAHNRLRVGDIGPGTWHELQALQVRHRLVSHTVPRAPPSPCLPCHVPNILVSW.

A signal peptide spans 1–26 (MAESGLAMWPSLLLLLLLPGPPPVAG). The LRRNT domain maps to 37–74 (ESLQPLPRACPLRCSCPRVDTVDCDGLDLRVFPDNITR). The N-linked (GlcNAc...) asparagine glycan is linked to N71. LRR repeat units follow at residues 75–96 (AAQHLSLQNNQLQELPYNELSR), 99–119 (GLRTLNLHNNLISSEGLPDEA), 125–146 (QLQHLCVAHNKLSVAPQFLPRS), 147–167 (LRVADLAANQVMEIFPLTFGE), 170–193 (ALRSVYLHNNQLSNAGLPPDAFRG), 196–216 (AIATLSLSNNQLSYLPPSLPP), 217–238 (SLERLHLQNNLISKVPRGALSR), 241–261 (QLRELYLQHNQLTDSGLDATT), 267–288 (SLEYLDLSHNQLTTVPAGLPRT), 289–309 (LAILHLGRNRIRQVEAARLHG), 312–332 (GLRYLLLQHNQLGSSGLPAGA), 338–359 (GLHTLHLYGNGLDRVPPALPRR), 360–380 (LRALVLPHNHVAALGARDLVA), 383–396 (GLTELNLAYNRLAS), 409–430 (ALRSLDLAGNQLTRLPMGLPTG), 431–451 (LRTLQLQRNQLRMLEPEPLAG), and 454–474 (QLRELSLAHNRLRVGDIGPGT).

Belongs to the small leucine-rich proteoglycan (SLRP) family. SLRP class V subfamily. N-glycosylated.

It is found in the secreted. The protein resides in the extracellular space. The protein localises to the extracellular matrix. This is Podocan-like protein 1 (PODNL1) from Homo sapiens (Human).